We begin with the raw amino-acid sequence, 653 residues long: Beta-galactosidase (653 aa).

A signal peptide spans 1 to 22; it reads MPGVVRLLALLLVPLLLGSARG. Positions 23–27 are excised as a propeptide; that stretch reads LHNAT. N25 is a glycosylation site (N-linked (GlcNAc...) asparagine). Y82 is a substrate binding site. N-linked (GlcNAc...) asparagine glycosylation occurs at N96. E128 and N186 together coordinate substrate. E187 acts as the Proton donor in catalysis. A disulfide bond links C194 and C229. The N-linked (GlcNAc...) asparagine glycan is linked to N246. The Nucleophile role is filled by E267. Residue Y332 coordinates substrate. N-linked (GlcNAc...) asparagine glycosylation is found at N463, N497, and N554. A disulfide bridge links C625 with C633.

The protein belongs to the glycosyl hydrolase 35 family. As to quaternary structure, homodimer. May form higher multimers.

The protein resides in the lysosome. The enzyme catalyses Hydrolysis of terminal non-reducing beta-D-galactose residues in beta-D-galactosides.. Functionally, cleaves beta-linked terminal galactosyl residues from gangliosides, glycoproteins, and glycosaminoglycans. This chain is Beta-galactosidase (GLB1), found in Bos taurus (Bovine).